Reading from the N-terminus, the 64-residue chain is Large ribosomal subunit protein bL35 (64 aa).

The disordered stretch occupies residues 1–55 (MPKMKTNKSVSARFKLTASGQLKRTRPGKRHKLSKKSSQEKRNLSKQPLVDKGQV). Positions 23-35 (KRTRPGKRHKLSK) are enriched in basic residues.

Belongs to the bacterial ribosomal protein bL35 family.

This chain is Large ribosomal subunit protein bL35, found in Chlamydia pneumoniae (Chlamydophila pneumoniae).